The chain runs to 129 residues: Small ribosomal subunit protein uS9 (129 aa).

The disordered stretch occupies residues 97 to 129 (LKAQGFLTRDPRKKERKKYGRKKARKSFQFSKR). Over residues 110–129 (KERKKYGRKKARKSFQFSKR) the composition is skewed to basic residues.

This sequence belongs to the universal ribosomal protein uS9 family.

This is Small ribosomal subunit protein uS9 from Chlamydia trachomatis serovar A (strain ATCC VR-571B / DSM 19440 / HAR-13).